Here is a 251-residue protein sequence, read N- to C-terminus: Triosephosphate isomerase (251 aa).

9–11 (NWK) serves as a coordination point for substrate. His-95 (electrophile) is an active-site residue. The active-site Proton acceptor is Glu-167. Residues Gly-173, Ser-212, and 233-234 (GG) contribute to the substrate site.

This sequence belongs to the triosephosphate isomerase family. In terms of assembly, homodimer.

Its subcellular location is the cytoplasm. It catalyses the reaction D-glyceraldehyde 3-phosphate = dihydroxyacetone phosphate. Its pathway is carbohydrate biosynthesis; gluconeogenesis. It participates in carbohydrate degradation; glycolysis; D-glyceraldehyde 3-phosphate from glycerone phosphate: step 1/1. Its function is as follows. Involved in the gluconeogenesis. Catalyzes stereospecifically the conversion of dihydroxyacetone phosphate (DHAP) to D-glyceraldehyde-3-phosphate (G3P). The chain is Triosephosphate isomerase from Pseudomonas fluorescens (strain ATCC BAA-477 / NRRL B-23932 / Pf-5).